The sequence spans 263 residues: Ribosomal RNA small subunit methyltransferase J (263 aa).

Residues 108–109, 124–125, and D178 contribute to the S-adenosyl-L-methionine site; these read RD and ER.

The protein belongs to the methyltransferase superfamily. RsmJ family.

It is found in the cytoplasm. It catalyses the reaction guanosine(1516) in 16S rRNA + S-adenosyl-L-methionine = N(2)-methylguanosine(1516) in 16S rRNA + S-adenosyl-L-homocysteine + H(+). Its function is as follows. Specifically methylates the guanosine in position 1516 of 16S rRNA. This is Ribosomal RNA small subunit methyltransferase J from Idiomarina loihiensis (strain ATCC BAA-735 / DSM 15497 / L2-TR).